Reading from the N-terminus, the 343-residue chain is 4-hydroxy-2-oxovalerate aldolase 2 (343 aa).

Residues 8–260 enclose the Pyruvate carboxyltransferase domain; that stretch reads ITVHDMSLRD…ETGVDVFAIS (253 aa). 16–17 contributes to the substrate binding site; the sequence is RD. Aspartate 17 lines the Mn(2+) pocket. Histidine 20 serves as the catalytic Proton acceptor. The substrate site is built by serine 170 and histidine 199. Mn(2+) is bound by residues histidine 199 and histidine 201. Tyrosine 290 is a binding site for substrate.

This sequence belongs to the 4-hydroxy-2-oxovalerate aldolase family.

The catalysed reaction is (S)-4-hydroxy-2-oxopentanoate = acetaldehyde + pyruvate. This chain is 4-hydroxy-2-oxovalerate aldolase 2, found in Burkholderia lata (strain ATCC 17760 / DSM 23089 / LMG 22485 / NCIMB 9086 / R18194 / 383).